The following is a 446-amino-acid chain: 6-methylsalicylate 1-monooxygenase atA (446 aa).

Residues 7–27 (VSVAIIGGGIGGLSLAIGLLQ) traverse the membrane as a helical segment. Residues glutamate 37 and alanine 50 each coordinate FAD. N-linked (GlcNAc...) asparagine glycosylation is present at asparagine 107. Position 116 (arginine 116) interacts with FAD. Arginine 200 is an active-site residue. FAD is bound by residues aspartate 311 and alanine 324.

It belongs to the paxM FAD-dependent monooxygenase family. It depends on FAD as a cofactor.

The protein localises to the membrane. It catalyses the reaction 6-methylsalicylate + AH2 + O2 + H(+) = 3-methylcatechol + A + CO2 + H2O. It functions in the pathway secondary metabolite biosynthesis. In terms of biological role, 6-methylsalicylate 1-monooxygenase; part of the gene cluster that mediates the biosynthesis of terreic acid, a quinone epoxide inhibitor of Bruton's tyrosine kinase. The first step of the pathway is the synthesis of 6-methylsalicylic acid (6-MSA) by the 6-methylsalicylic acid synthase atX. In the biosynthesis of 6-MSA, atX utilizes one acetyl-CoA and three malonyl-CoAs as its substrates and catalyzes a series of programmed reactions including Claisen condensation, reduction, aldol cyclization, and the hydrolytic cleavage that yields 6-MSA. The 6-methylsalicylate 1-monooxygenase atA then catalyzes the decarboxylative hydroxylation of 6-MSA to 3-methylcatechol. The next step is the conversion of 3-methylcatechol to 3-methyl-1,2,4-benzenetriol by cytochrome P450 monooxygenase atE, which is enhanced by cytochrome P450 monooxygenase atG. Then, the epoxidase atD catalyzes the epoxidation and hydroxyl oxidation of 3-methyl-1,2,4-benzenetriol to terremutin. Lastly, GMC oxidoreductase atC oxidizes terremutin to terreic acid. The polypeptide is 6-methylsalicylate 1-monooxygenase atA (Aspergillus terreus (strain NIH 2624 / FGSC A1156)).